The chain runs to 84 residues: U21-theraphotoxin-Cg1c (84 aa).

Positions Met1–Ala21 are cleaved as a signal peptide. The propeptide occupies Glu22–Arg47. Cystine bridges form between Cys49-Cys63, Cys56-Cys68, and Cys62-Cys76.

The protein belongs to the neurotoxin 10 (Hwtx-1) family. 05 (F4a) subfamily. In terms of tissue distribution, expressed by the venom gland.

It localises to the secreted. In terms of biological role, probable ion channel inhibitor. In Chilobrachys guangxiensis (Chinese earth tiger tarantula), this protein is U21-theraphotoxin-Cg1c.